Here is a 479-residue protein sequence, read N- to C-terminus: Adenylate kinase 8 (479 aa).

2 adenylate kinase regions span residues 58–258 and 269–471; these read PKVV…TYVQ and PKVL…SGII. 67 to 72 is an ATP binding site; it reads ASGKTT. An NMP 1 region spans residues 87 to 113; that stretch reads TKESLLEREFSRLSVEAKSYYQVYKKI. Residues 140-143, glutamine 147, and arginine 203 each bind AMP; that span reads GIPE. Residues 177–206 form an LID 1 region; that stretch reads GKRIDPVTGEIYHTTFDWPPEPEIQNRLRQ. ATP is bound at residue 278 to 283; that stretch reads GSGKRL. Residues 298 to 327 form an NMP 2 region; that stretch reads SCGQLLKEAVAAKSSFGELIQPFFEKRMTV. AMP contacts are provided by residues 325-327, 354-357, and glutamine 361; these read MTV and GFPR. The LID 2 stretch occupies residues 391-424; that stretch reads LRRTDPVTGERFHLMYKPPPTIEVQVRLLQNPKD. Arginine 392 contributes to the ATP binding site.

It belongs to the adenylate kinase family. As to quaternary structure, interacts with CFAP45 and CFAP52; CFAP45 and AK8 dimerization may create a cavity at the interface of the dimer that can accommodate AMP.

Its subcellular location is the cytoplasm. The protein resides in the cytosol. The protein localises to the cytoskeleton. It is found in the cilium axoneme. It catalyses the reaction AMP + ATP = 2 ADP. It carries out the reaction a 2'-deoxyribonucleoside 5'-diphosphate + ATP = a 2'-deoxyribonucleoside 5'-triphosphate + ADP. The catalysed reaction is a ribonucleoside 5'-diphosphate + ATP = a ribonucleoside 5'-triphosphate + ADP. Its function is as follows. Nucleoside monophosphate (NMP) kinase that catalyzes the reversible transfer of the terminal phosphate group between nucleoside triphosphates and monophosphates. Has highest activity toward AMP, and weaker activity toward dAMP, CMP and dCMP. Also displays broad nucleoside diphosphate kinase activity. The chain is Adenylate kinase 8 (Ak8) from Mus musculus (Mouse).